The chain runs to 275 residues: Exosome complex component RRP40 (275 aa).

An N-acetylalanine modification is found at Ala-2. A Glycyl lysine isopeptide (Lys-Gly) (interchain with G-Cter in SUMO2) cross-link involves residue Lys-151.

The protein belongs to the RRP40 family. In terms of assembly, component of the RNA exosome core complex (Exo-9), composed of EXOSC1, EXOSC2, EXOSC3, EXOSC4, EXOSC5, EXOSC6, EXOSC7, EXOSC8 and EXOSC9; within the complex interacts with EXOSC5 and EXOSC9. The catalytically inactive RNA exosome core complex (Exo-9) associates with the catalytic subunit EXOSC10/RRP6. Exo-9 may associate with DIS3 to form the nucleolar exosome complex, or DIS3L to form the cytoplasmic exosome complex. Exo-9 is formed by a hexameric base ring consisting of the heterodimers EXOSC4-EXOSC9, EXOSC5-EXOSC8 and EXOSC6-EXOSC7, and a cap ring consisting of EXOSC1, EXOSC2 and EXOSC3. The RNA exosome complex associates with cofactors C1D/RRP47, MPHOSPH6/MPP6 and MTREX/MTR4. Interacts with MPHOSPH6/MPP6; the interaction is direct. Interacts with GTPBP1. Interacts with ZC3HAV1. Interacts with DDX17 only in the presence of ZC3HAV1 in an RNA-independent manner. Interacts with DHX36; this interaction occurs in a RNase-insensitive manner. Interacts with HBS1L isoform 2.

It is found in the cytoplasm. Its subcellular location is the nucleus. It localises to the nucleolus. In terms of biological role, non-catalytic component of the RNA exosome complex which has 3'-&gt;5' exoribonuclease activity and participates in a multitude of cellular RNA processing and degradation events. In the nucleus, the RNA exosome complex is involved in proper maturation of stable RNA species such as rRNA, snRNA and snoRNA, in the elimination of RNA processing by-products and non-coding 'pervasive' transcripts, such as antisense RNA species and promoter-upstream transcripts (PROMPTs), and of mRNAs with processing defects, thereby limiting or excluding their export to the cytoplasm. The RNA exosome may be involved in Ig class switch recombination (CSR) and/or Ig variable region somatic hypermutation (SHM) by targeting AICDA deamination activity to transcribed dsDNA substrates. In the cytoplasm, the RNA exosome complex is involved in general mRNA turnover and specifically degrades inherently unstable mRNAs containing AU-rich elements (AREs) within their 3' untranslated regions, and in RNA surveillance pathways, preventing translation of aberrant mRNAs. It seems to be involved in degradation of histone mRNA. The catalytic inactive RNA exosome core complex of 9 subunits (Exo-9) is proposed to play a pivotal role in the binding and presentation of RNA for ribonucleolysis, and to serve as a scaffold for the association with catalytic subunits and accessory proteins or complexes. EXOSC3 as peripheral part of the Exo-9 complex stabilizes the hexameric ring of RNase PH-domain subunits through contacts with EXOSC9 and EXOSC5. This Homo sapiens (Human) protein is Exosome complex component RRP40 (EXOSC3).